A 660-amino-acid polypeptide reads, in one-letter code: MVHSEAKMTRPDSASASKQQLLNGNADIQETNQKRSIEKNLCSQYEEKVRPCIDLIDSLRALGVEQDLALPAIAVIGDQSSGKSSVLEALSGVALPRGSGIVTRCPLVLKLKRLVKEDEWKGKVSYRDIEVEISNALDVEEQVRKAQNVLAGEGVGISQELVTLEVSSPHVPDLTLIDLPGITRVAVGNQPADIGRQIKTLIRKYIQRQETINLVVVPSNVDIATTEALSMAQEVDPEGDRTIGILTKPDLVDKGTEEQVVDVVRNLICHLKKGYMIVKCRGQQDIQDRLSLAEALQREKAFFEENPYFRGLLEEGRASVPCLAERLTTELITHISKSLPLLENQIKESYQNLSDELQKYGTDIPEDETEKTFFLIVKITTFNQNITSFVQGEELVGPNDTRLFNKIRQEFQKWSGVIENNFRKGGEAIRRQIWTFENQYRGRELPGFVNYRTFETIIKQQIQLLEEPAIDMLHRISDLVRDTFTKVSEKNFSEFFNLHRTTKSKLEDIKLEQENEAEKSIRLHFQMEKIVYCQDHVYRGTLQKVRENEMEEEKKKKTINVWGQNTSTESSMAEILEHLNAYQHEAGNRLSTHIPLIIQFFVLQTFGQQLQKSMLQLLQDRDTYDWLLKERNDTCDKRKFLKERLARLAQARRRLAKFPG.

M1 carries the post-translational modification N-acetylmethionine. Positions 1–10 are enriched in basic and acidic residues; it reads MVHSEAKMTR. The segment at 1 to 29 is disordered; that stretch reads MVHSEAKMTRPDSASASKQQLLNGNADIQ. Residues 12 to 29 show a composition bias toward polar residues; that stretch reads DSASASKQQLLNGNADIQ. In terms of domain architecture, Dynamin-type G spans 67–340; it reads DLALPAIAVI…LITHISKSLP (274 aa). The interval 77-84 is G1 motif; that stretch reads GDQSSGKS. Position 77–84 (77–84) interacts with GTP; the sequence is GDQSSGKS. The interval 102–104 is G2 motif; it reads VTR. The segment at 178–181 is G3 motif; that stretch reads DLPG. Residues 178-182 and 247-250 contribute to the GTP site; these read DLPGI and TKPD. The segment at 247–250 is G4 motif; that stretch reads TKPD. Positions 279 to 282 are G5 motif; the sequence is KCRG. Residues 341-366 are bundle signaling element (BSE); sequence LLENQIKESYQNLSDELQKYGTDIPE. The segment at 366 to 533 is middle domain; sequence EDETEKTFFL…HFQMEKIVYC (168 aa). The segment at 367-630 is stalk; the sequence is DETEKTFFLI…RDTYDWLLKE (264 aa). The segment at 554-557 is critical for lipid-binding; the sequence is KKKK. The GED domain maps to 572-660; that stretch reads MAEILEHLNA…ARRRLAKFPG (89 aa).

Belongs to the TRAFAC class dynamin-like GTPase superfamily. Dynamin/Fzo/YdjA family. Homooligomer. Oligomerizes into multimeric filamentous or ring-like structures by virtue of its stalk domain. Oligomerization is critical for GTPase activity, protein stability, and recognition of viral target structures. Interacts with TRPC1, TRPC3, TRPC4, TRPC5, TRPC6 and TRPC7. Interacts with HSPA5. Interacts with TUBB/TUBB5. Interacts with DDX39A and DDX39B. Post-translationally, ISGylated.

It is found in the cytoplasm. The protein resides in the endoplasmic reticulum membrane. It localises to the perinuclear region. Its function is as follows. Interferon-induced dynamin-like GTPase with antiviral activity. The protein is Interferon-induced GTP-binding protein Mx1 (MX1) of Equus caballus (Horse).